Reading from the N-terminus, the 505-residue chain is Annexin A11 (505 aa).

Pro residues-rich tracts occupy residues 1–17 and 99–160; these read MSYP…PPAA and PVPP…PVPL. Disordered regions lie at residues 1-38 and 84-199; these read MSYP…PPIG and PVPP…DAPG. Over residues 161 to 177 the composition is skewed to low complexity; the sequence is PGQQQPVPSYPGYPGSG. Annexin repeat units follow at residues 200–271, 272–343, 355–427, and 431–502; these read FDPL…ALMK, TPVL…SLSQ, SLAQ…AVVK, and NTPA…KICG. An N6-acetyllysine mark is found at Lys248 and Lys255. Residue Lys479 is modified to N6-acetyllysine.

The protein belongs to the annexin family. As to quaternary structure, interacts with S100A6. Interacts with PDCD6 in a calcium-dependent manner. Interacts with KIF23 during cytokinesis.

Its subcellular location is the cytoplasm. The protein resides in the melanosome. The protein localises to the nucleus envelope. It is found in the nucleus. It localises to the nucleoplasm. Its subcellular location is the cytoskeleton. The protein resides in the spindle. Binds specifically to calcyclin in a calcium-dependent manner. Required for midbody formation and completion of the terminal phase of cytokinesis. The sequence is that of Annexin A11 (ANXA11) from Homo sapiens (Human).